The following is a 237-amino-acid chain: Ribosomal RNA small subunit methyltransferase G (237 aa).

S-adenosyl-L-methionine-binding positions include glycine 78, phenylalanine 83, 129–130, and arginine 148; that span reads AE.

It belongs to the methyltransferase superfamily. RNA methyltransferase RsmG family.

It is found in the cytoplasm. Its function is as follows. Specifically methylates the N7 position of a guanine in 16S rRNA. This is Ribosomal RNA small subunit methyltransferase G from Streptococcus pyogenes serotype M3 (strain ATCC BAA-595 / MGAS315).